The sequence spans 396 residues: Methylthioribose kinase (396 aa).

Residues asparagine 44, lysine 61, and 115 to 117 (EDL) contribute to the ATP site. Aspartate 233 contacts substrate. An ATP-binding site is contributed by 250-252 (DPE). Residue arginine 340 participates in substrate binding.

This sequence belongs to the methylthioribose kinase family. In terms of assembly, homodimer.

The enzyme catalyses 5-(methylsulfanyl)-D-ribose + ATP = 5-(methylsulfanyl)-alpha-D-ribose 1-phosphate + ADP + H(+). It participates in amino-acid biosynthesis; L-methionine biosynthesis via salvage pathway; S-methyl-5-thio-alpha-D-ribose 1-phosphate from S-methyl-5'-thioadenosine (hydrolase route): step 2/2. Catalyzes the phosphorylation of methylthioribose into methylthioribose-1-phosphate. This is Methylthioribose kinase from Geobacillus thermodenitrificans (strain NG80-2).